A 713-amino-acid polypeptide reads, in one-letter code: B3 domain-containing transcription factor VAL3 (713 aa).

Positions 328–427 (FEKILSATDT…KLILGFRKAS (100 aa)) form a DNA-binding region, TF-B3. 2 disordered regions span residues 459 to 478 (VECS…SKRQ) and 616 to 713 (LNSD…TSSM). Positions 464-477 (GKKKSSMMITRSKR) are enriched in basic residues. The segment covering 616 to 629 (LNSDNGLHQSANNS) has biased composition (polar residues). A compositionally biased stretch (basic and acidic residues) spans 663 to 674 (TKSETLPHDDTV). A compositionally biased stretch (low complexity) spans 676 to 688 (SSFTSPSSSSAHS). Residues 690–700 (NNKEDEGKLKT) show a composition bias toward basic and acidic residues. Over residues 701-713 (TTEIADTTTTSSM) the composition is skewed to low complexity.

It localises to the nucleus. Functionally, may be involved in plant development. The polypeptide is B3 domain-containing transcription factor VAL3 (VAL3) (Arabidopsis thaliana (Mouse-ear cress)).